The following is a 394-amino-acid chain: Chorismate synthase (394 aa).

NADP(+) is bound by residues arginine 42 and arginine 48. Residues 137 to 139, 258 to 259, glycine 302, 317 to 321, and arginine 343 contribute to the FMN site; these read RAS, QA, and KPIAT.

This sequence belongs to the chorismate synthase family. As to quaternary structure, homotetramer. It depends on FMNH2 as a cofactor.

It carries out the reaction 5-O-(1-carboxyvinyl)-3-phosphoshikimate = chorismate + phosphate. It functions in the pathway metabolic intermediate biosynthesis; chorismate biosynthesis; chorismate from D-erythrose 4-phosphate and phosphoenolpyruvate: step 7/7. Its function is as follows. Catalyzes the anti-1,4-elimination of the C-3 phosphate and the C-6 proR hydrogen from 5-enolpyruvylshikimate-3-phosphate (EPSP) to yield chorismate, which is the branch point compound that serves as the starting substrate for the three terminal pathways of aromatic amino acid biosynthesis. This reaction introduces a second double bond into the aromatic ring system. This chain is Chorismate synthase, found in Streptomyces avermitilis (strain ATCC 31267 / DSM 46492 / JCM 5070 / NBRC 14893 / NCIMB 12804 / NRRL 8165 / MA-4680).